The sequence spans 63 residues: Cytochrome c oxidase subunit 7C, mitochondrial (63 aa).

The N-terminal 16 residues, 1–16 (MLGQSIRRFTTSVVRR), are a transit peptide targeting the mitochondrion. Topologically, residues 17 to 33 (SHYEEGPGKNIPFSVEN) are mitochondrial matrix. K25 carries the N6-acetyllysine; alternate modification. An N6-succinyllysine; alternate modification is found at K25. Residues 34-60 (KWRLLAMMTLFFGSGFAAPFFIVRHQL) traverse the membrane as a helical segment. The Mitochondrial intermembrane segment spans residues 61–63 (LKK).

This sequence belongs to the cytochrome c oxidase VIIc family. As to quaternary structure, component of the cytochrome c oxidase (complex IV, CIV), a multisubunit enzyme composed of 14 subunits. The complex is composed of a catalytic core of 3 subunits MT-CO1, MT-CO2 and MT-CO3, encoded in the mitochondrial DNA, and 11 supernumerary subunits COX4I1 (or COX4I2), COX5A, COX5B, COX6A2 (or COX6A1), COX6B1 (or COX6B2), COX6C, COX7A1 (or COX7A2), COX7B, COX7C, COX8B and NDUFA4, which are encoded in the nuclear genome. The complex exists as a monomer or a dimer and forms supercomplexes (SCs) in the inner mitochondrial membrane with NADH-ubiquinone oxidoreductase (complex I, CI) and ubiquinol-cytochrome c oxidoreductase (cytochrome b-c1 complex, complex III, CIII), resulting in different assemblies (supercomplex SCI(1)III(2)IV(1) and megacomplex MCI(2)III(2)IV(2)). Interacts with RAB5IF. As to expression, liver, heart, muscle and brain, contain the same isoform of COX VIIc, but at different concentrations.

It localises to the mitochondrion inner membrane. Its pathway is energy metabolism; oxidative phosphorylation. In terms of biological role, component of the cytochrome c oxidase, the last enzyme in the mitochondrial electron transport chain which drives oxidative phosphorylation. The respiratory chain contains 3 multisubunit complexes succinate dehydrogenase (complex II, CII), ubiquinol-cytochrome c oxidoreductase (cytochrome b-c1 complex, complex III, CIII) and cytochrome c oxidase (complex IV, CIV), that cooperate to transfer electrons derived from NADH and succinate to molecular oxygen, creating an electrochemical gradient over the inner membrane that drives transmembrane transport and the ATP synthase. Cytochrome c oxidase is the component of the respiratory chain that catalyzes the reduction of oxygen to water. Electrons originating from reduced cytochrome c in the intermembrane space (IMS) are transferred via the dinuclear copper A center (CU(A)) of subunit 2 and heme A of subunit 1 to the active site in subunit 1, a binuclear center (BNC) formed by heme A3 and copper B (CU(B)). The BNC reduces molecular oxygen to 2 water molecules using 4 electrons from cytochrome c in the IMS and 4 protons from the mitochondrial matrix. The chain is Cytochrome c oxidase subunit 7C, mitochondrial (COX7C) from Bos taurus (Bovine).